The chain runs to 302 residues: MAARNGGTIIDGKAFASGVRGRVASAVAGLEAAHGVVPGLAVVLVGEDPASQVYVRNKGIQTREAGMASFEHKLPAETAQAELMALIERLNADPAVHGILVQLPLPRHMDAEAVINAIDPKKDVDGFHVLNVGLLGTGQKAMVPCTPLGCLMLLRDTLGDLSGLNAVVVGRSNIVGKPMAQLLLNESCTVTIAHSRTRDLAGLCRTADILVAAVGRPRMIRGDWIKPGATVIDVGINRIEEAGRSRLVGDVDFDSAAPVAGAITPVPGGVGPMTIACLLANTLTACCRANGLPEPDFAEAGG.

Residues 170–172, Ser195, and Ile236 contribute to the NADP(+) site; that span reads GRS.

It belongs to the tetrahydrofolate dehydrogenase/cyclohydrolase family. Homodimer.

It carries out the reaction (6R)-5,10-methylene-5,6,7,8-tetrahydrofolate + NADP(+) = (6R)-5,10-methenyltetrahydrofolate + NADPH. It catalyses the reaction (6R)-5,10-methenyltetrahydrofolate + H2O = (6R)-10-formyltetrahydrofolate + H(+). It functions in the pathway one-carbon metabolism; tetrahydrofolate interconversion. Its function is as follows. Catalyzes the oxidation of 5,10-methylenetetrahydrofolate to 5,10-methenyltetrahydrofolate and then the hydrolysis of 5,10-methenyltetrahydrofolate to 10-formyltetrahydrofolate. This Paracoccus denitrificans (strain Pd 1222) protein is Bifunctional protein FolD 2.